A 388-amino-acid polypeptide reads, in one-letter code: Protein TsgA homolog (388 aa).

Transmembrane regions (helical) follow at residues 11 to 31 (WISF…GMIM), 50 to 70 (TFLN…IEII), 77 to 97 (IFSF…NSIF), 101 to 121 (INMF…TFII), 133 to 153 (LLLL…IVTA), 160 to 180 (IIWY…FLLT), 206 to 226 (VFLL…FISW), 244 to 264 (SLVS…SFII), 268 to 288 (NLYR…YCFI), 298 to 318 (YIII…ITLA), 332 to 352 (LILL…SPIV), and 360 to 380 (TLIS…LIYF).

Belongs to the major facilitator superfamily. TsgA family.

The protein localises to the cell membrane. This chain is Protein TsgA homolog, found in Buchnera aphidicola subsp. Acyrthosiphon pisum (strain Tuc7).